A 273-amino-acid polypeptide reads, in one-letter code: Putative pyruvate, phosphate dikinase regulatory protein (273 aa).

149–156 (GPSRTSKT) contacts ADP.

This sequence belongs to the pyruvate, phosphate/water dikinase regulatory protein family. PDRP subfamily.

The catalysed reaction is N(tele)-phospho-L-histidyl/L-threonyl-[pyruvate, phosphate dikinase] + ADP = N(tele)-phospho-L-histidyl/O-phospho-L-threonyl-[pyruvate, phosphate dikinase] + AMP + H(+). The enzyme catalyses N(tele)-phospho-L-histidyl/O-phospho-L-threonyl-[pyruvate, phosphate dikinase] + phosphate + H(+) = N(tele)-phospho-L-histidyl/L-threonyl-[pyruvate, phosphate dikinase] + diphosphate. Bifunctional serine/threonine kinase and phosphorylase involved in the regulation of the pyruvate, phosphate dikinase (PPDK) by catalyzing its phosphorylation/dephosphorylation. The sequence is that of Putative pyruvate, phosphate dikinase regulatory protein from Rickettsia bellii (strain OSU 85-389).